We begin with the raw amino-acid sequence, 149 residues long: 3-dehydroquinate dehydratase (149 aa).

Residue Tyr-24 is the Proton acceptor of the active site. Substrate contacts are provided by Asn-75, His-81, and Asp-88. His-101 (proton donor) is an active-site residue. Residues 102–103 (IS) and Arg-112 contribute to the substrate site.

It belongs to the type-II 3-dehydroquinase family. In terms of assembly, homododecamer.

It carries out the reaction 3-dehydroquinate = 3-dehydroshikimate + H2O. It participates in metabolic intermediate biosynthesis; chorismate biosynthesis; chorismate from D-erythrose 4-phosphate and phosphoenolpyruvate: step 3/7. Catalyzes a trans-dehydration via an enolate intermediate. The protein is 3-dehydroquinate dehydratase of Methylobacterium radiotolerans (strain ATCC 27329 / DSM 1819 / JCM 2831 / NBRC 15690 / NCIMB 10815 / 0-1).